A 279-amino-acid chain; its full sequence is Phosphatidylglycerol--prolipoprotein diacylglyceryl transferase (279 aa).

3 consecutive transmembrane segments (helical) span residues 22-42, 52-72, and 89-109; these read WYGI…QAAL, LIDI…IYFV, and IWHG…SGII. A 1,2-diacyl-sn-glycero-3-phospho-(1'-sn-glycerol) is bound at residue Arg-137. 2 helical membrane passes run 203-223 and 235-255; these read LGET…FVEA and IRVA…FVIY.

This sequence belongs to the Lgt family.

The protein resides in the cell membrane. The catalysed reaction is L-cysteinyl-[prolipoprotein] + a 1,2-diacyl-sn-glycero-3-phospho-(1'-sn-glycerol) = an S-1,2-diacyl-sn-glyceryl-L-cysteinyl-[prolipoprotein] + sn-glycerol 1-phosphate + H(+). Its pathway is protein modification; lipoprotein biosynthesis (diacylglyceryl transfer). In terms of biological role, catalyzes the transfer of the diacylglyceryl group from phosphatidylglycerol to the sulfhydryl group of the N-terminal cysteine of a prolipoprotein, the first step in the formation of mature lipoproteins. The chain is Phosphatidylglycerol--prolipoprotein diacylglyceryl transferase from Staphylococcus epidermidis (strain ATCC 35984 / DSM 28319 / BCRC 17069 / CCUG 31568 / BM 3577 / RP62A).